The primary structure comprises 926 residues: Alanine--tRNA ligase (926 aa).

Residues H577, H581, C680, and H684 each coordinate Zn(2+).

It belongs to the class-II aminoacyl-tRNA synthetase family. The cofactor is Zn(2+).

It is found in the cytoplasm. It catalyses the reaction tRNA(Ala) + L-alanine + ATP = L-alanyl-tRNA(Ala) + AMP + diphosphate. In terms of biological role, catalyzes the attachment of alanine to tRNA(Ala) in a two-step reaction: alanine is first activated by ATP to form Ala-AMP and then transferred to the acceptor end of tRNA(Ala). Also edits incorrectly charged Ser-tRNA(Ala) and Gly-tRNA(Ala) via its editing domain. In Methylacidiphilum infernorum (isolate V4) (Methylokorus infernorum (strain V4)), this protein is Alanine--tRNA ligase.